The chain runs to 380 residues: S-adenosylmethionine synthase (380 aa).

Position 15 (H15) interacts with ATP. D17 serves as a coordination point for Mg(2+). A K(+)-binding site is contributed by E43. E56 and Q99 together coordinate L-methionine. Positions Q99–N109 are flexible loop. Residues D164 to K166, R230 to F231, D239, R245 to K246, and K266 each bind ATP. D239 provides a ligand contact to L-methionine. K270 lines the L-methionine pocket.

It belongs to the AdoMet synthase family. In terms of assembly, homotetramer; dimer of dimers. Requires Mg(2+) as cofactor. The cofactor is K(+).

It localises to the cytoplasm. The enzyme catalyses L-methionine + ATP + H2O = S-adenosyl-L-methionine + phosphate + diphosphate. It functions in the pathway amino-acid biosynthesis; S-adenosyl-L-methionine biosynthesis; S-adenosyl-L-methionine from L-methionine: step 1/1. In terms of biological role, catalyzes the formation of S-adenosylmethionine (AdoMet) from methionine and ATP. The overall synthetic reaction is composed of two sequential steps, AdoMet formation and the subsequent tripolyphosphate hydrolysis which occurs prior to release of AdoMet from the enzyme. The polypeptide is S-adenosylmethionine synthase (Rickettsia prowazekii (strain Madrid E)).